Consider the following 309-residue polypeptide: Acetolactate synthase small subunit, mitochondrial (309 aa).

The transit peptide at 1-24 directs the protein to the mitochondrion; it reads MLRSLLQSGHRRVVASSCATMVRC. The ACT domain maps to 79–159; it reads VLNCLVQNEP…DYTNSEIIKR (81 aa).

Belongs to the acetolactate synthase small subunit family. In terms of assembly, the acetolactate synthase complex contains the catalytic regulatory subunit ILV2 and the regulatory small subunit ILV6.

The protein localises to the mitochondrion. It functions in the pathway amino-acid biosynthesis; L-isoleucine biosynthesis; L-isoleucine from 2-oxobutanoate: step 1/4. It participates in amino-acid biosynthesis; L-valine biosynthesis; L-valine from pyruvate: step 1/4. Its function is as follows. Regulatory subunit of mitochondrial acetolactate synthase, which catalyzes the first of a series of common steps in the biosynthesis of the branched-chain amino acids. Stimulates activity of the acetolactate synthase catalytic subunit ILV2 seven- to tenfold and confers sensitivity to inhibition by valine and activation by ATP. This is Acetolactate synthase small subunit, mitochondrial (ILV6) from Saccharomyces cerevisiae (strain ATCC 204508 / S288c) (Baker's yeast).